The following is a 269-amino-acid chain: Sororin (269 aa).

3 disordered regions span residues 1–39 (MSEG…IMKR), 56–110 (VNTG…PKIN), and 146–169 (SLNS…STPN). The segment covering 57–66 (NTGSQSTPKV) has biased composition (polar residues). The KEN box motif lies at 85–87 (KEN). Positions 146–155 (SLNSSSSLYS) are enriched in low complexity. The FGF motif signature appears at 180 to 182 (FGF). The interval 247 to 269 (LDEWAAFMNAEFEEAEKFDLTVE) is C-terminal Sororin domain.

The protein belongs to the sororin family. Interacts with the APC/C complex. Interacts with the chromatin-bound cohesin complex; the interaction is indirect, occurs after DNA replication and requires acetylation of the cohesin component smc3. Interacts (via the FGF motif) with pds5a and pds5b; the interaction is direct and prevents the interaction of pds5a with wapl. Post-translationally, ubiquitinated by the APC/C complex in G1, leading to its degradation.

The protein localises to the nucleus. It is found in the chromosome. The protein resides in the cytoplasm. Regulator of sister chromatid cohesion in mitosis stabilizing cohesin complex association with chromatin. May antagonize the action of wapl which stimulates cohesin dissociation from chromatin. Cohesion ensures that chromosome partitioning is accurate in both meiotic and mitotic cells and plays an important role in DNA repair. Required for efficient DNA double-stranded break repair. This is Sororin (cdca5-a) from Xenopus laevis (African clawed frog).